Reading from the N-terminus, the 883-residue chain is Brevican core protein (883 aa).

An N-terminal signal peptide occupies residues 1–22 (MIPLLLSLLAALVLTQAPAALA). The 120-residue stretch at 35 to 154 (FRVRIGAAQL…SSDAVEVKVK (120 aa)) folds into the Ig-like V-type domain. Disulfide bonds link C56–C136, C178–C249, C202–C223, C276–C351, and C300–C321. An N-linked (GlcNAc...) asparagine glycan is attached at N129. Link domains follow at residues 156 to 251 (VVFL…YCYA) and 256 to 353 (GELF…YCFR). Residue N336 is glycosylated (N-linked (GlcNAc...) asparagine). Residues 389–574 (QEAVESESRG…EDGPSLLPET (186 aa)) form a disordered region. S413 carries the phosphoserine modification. S413 carries an O-linked (Xyl...) (chondroitin sulfate) serine glycan. Positions 428-440 (ESETQSVAPPTGS) are enriched in polar residues. Acidic residues predominate over residues 441–451 (SEEEGEALEEE). Over residues 452–467 (ERFKDTETPKEEKEQE) the composition is skewed to basic and acidic residues. Residue S622 is the site of GPI-anchor amidated serine attachment. The region spanning 622 to 658 (SSGDCIPSPCHNGGTCLEEKEGFRCLCVPGYGGDLCD) is the EGF-like domain. Disulfide bonds link C626/C637, C631/C646, C648/C657, C692/C784, C760/C776, C791/C834, and C820/C847. In terms of domain architecture, C-type lectin spans 658–786 (DVGLHFCSPG…NYHLSYTCKM (129 aa)). The Sushi domain maps to 789–849 (VSCGPPPQLP…WEAPQISCVP (61 aa)). Residues 859–883 (MTAPEGPRGQLPRQRKALLTPPSSL) are disordered.

The protein belongs to the aggrecan/versican proteoglycan family. In terms of assembly, interacts with TNR. O-glycosylated; contains chondroitin sulfate. As to expression, brain.

The protein resides in the secreted. The protein localises to the extracellular space. It localises to the extracellular matrix. It is found in the membrane. May play a role in the terminally differentiating and the adult nervous system during postnatal development. Could stabilize interactions between hyaluronan (HA) and brain proteoglycans. Isoform 2 may function as a chondroitin sulfate-bearing cell surface receptor. This Rattus norvegicus (Rat) protein is Brevican core protein (Bcan).